Reading from the N-terminus, the 392-residue chain is Phospho-N-acetylmuramoyl-pentapeptide-transferase (392 aa).

The next 10 membrane-spanning stretches (helical) occupy residues 29-49 (AVLAALTALLIGLAAGSWVIG), 76-96 (TMGGVLILLSIALSTLLWFDL), 100-120 (FVWIVLLVTLGFGAIGWVDDW), 137-157 (YLWQSLIGLMAALYLVFCISE), 192-212 (AVSYPLGVLGFVLLTYLVIVG), 225-245 (GLAIMPVVMVGSALGVFAYVT), 262-282 (SGELLIFCAAMAGAGLAFLWF), 289-309 (VFMGDVGALALGAALGTIAII), 314-334 (IVLAVMGGIFVAEALSVMLQV), and 369-389 (QVVVRFWIITMLLCLVGLSTL).

The protein belongs to the glycosyltransferase 4 family. MraY subfamily. Mg(2+) is required as a cofactor.

It localises to the cell inner membrane. It carries out the reaction UDP-N-acetyl-alpha-D-muramoyl-L-alanyl-gamma-D-glutamyl-meso-2,6-diaminopimeloyl-D-alanyl-D-alanine + di-trans,octa-cis-undecaprenyl phosphate = di-trans,octa-cis-undecaprenyl diphospho-N-acetyl-alpha-D-muramoyl-L-alanyl-D-glutamyl-meso-2,6-diaminopimeloyl-D-alanyl-D-alanine + UMP. It functions in the pathway cell wall biogenesis; peptidoglycan biosynthesis. Its function is as follows. Catalyzes the initial step of the lipid cycle reactions in the biosynthesis of the cell wall peptidoglycan: transfers peptidoglycan precursor phospho-MurNAc-pentapeptide from UDP-MurNAc-pentapeptide onto the lipid carrier undecaprenyl phosphate, yielding undecaprenyl-pyrophosphoryl-MurNAc-pentapeptide, known as lipid I. This is Phospho-N-acetylmuramoyl-pentapeptide-transferase from Verminephrobacter eiseniae (strain EF01-2).